The primary structure comprises 277 residues: Carbonyl reductase [NADPH] 1 (277 aa).

The residue at position 2 (Ser2) is an N-acetylserine. 2 positions are modified to phosphoserine: Ser2 and Ser30. NADP(+) contacts are provided by residues 10–34 (VTGA…GDVV), 63–64 (DI), and Asn90. Glutathione contacts are provided by residues 95 to 97 (FKV) and Gln106. Substrate is bound at residue Ser140. Glutathione is bound at residue 193-194 (AY). Tyr194 functions as the Proton acceptor in the catalytic mechanism. Residues 194-198 (YGVTK) and 231-233 (VRT) each bind NADP(+). Lys239 bears the N6-1-carboxyethyl lysine mark. A disordered region spans residues 258 to 277 (PPDAEGPHGQFVQDKKVEPW).

This sequence belongs to the short-chain dehydrogenases/reductases (SDR) family. As to quaternary structure, monomer.

It localises to the cytoplasm. It catalyses the reaction a secondary alcohol + NADP(+) = a ketone + NADPH + H(+). The enzyme catalyses prostaglandin F2alpha + NADP(+) = prostaglandin E2 + NADPH + H(+). The catalysed reaction is prostaglandin E1 + NADP(+) = 15-oxoprostaglandin E1 + NADPH + H(+). It carries out the reaction menadione + NADPH + H(+) = menadiol + NADP(+). It catalyses the reaction prostaglandin D2 + NADP(+) = 15-oxoprostaglandin D2 + NADPH + H(+). The enzyme catalyses prostaglandin E2 + NADP(+) = 15-oxoprostaglandin E2 + NADPH + H(+). The catalysed reaction is prostaglandin F2alpha + NADP(+) = 15-oxoprostaglandin F2alpha + NADPH + H(+). It carries out the reaction daunorubicin + NADPH + H(+) = 13-dihydrodaunorubicin + NADP(+). It catalyses the reaction S-nitrosoglutathione + NADPH + H(+) = S-(hydroxysulfenamide)glutathione + NADP(+). The enzyme catalyses corticosterone + NADPH + H(+) = 20beta-dihydrocorticosterone + NADP(+). The catalysed reaction is a primary alcohol + NADP(+) = an aldehyde + NADPH + H(+). It carries out the reaction cortisol + NADPH + H(+) = 20beta-dihydrocortisol + NADP(+). NADPH-dependent reductase with broad substrate specificity. Catalyzes the reduction of a wide variety of carbonyl compounds including quinones, prostaglandins, menadione, plus various xenobiotics. Catalyzes the reduction of the antitumor anthracyclines doxorubicin and daunorubicin to the cardiotoxic compounds doxorubicinol and daunorubicinol. Can convert prostaglandin E to prostaglandin F2-alpha. Can bind glutathione, which explains its higher affinity for glutathione-conjugated substrates. Catalyzes the reduction of S-nitrosoglutathione. In addition, participates in the glucocorticoid metabolism by catalyzing the NADPH-dependent cortisol/corticosterone into 20beta-dihydrocortisol (20b-DHF) or 20beta-corticosterone (20b-DHB), which are weak agonists of NR3C1 and NR3C2 in adipose tissue. This is Carbonyl reductase [NADPH] 1 from Mus musculus (Mouse).